Reading from the N-terminus, the 225-residue chain is Ribonuclease 3 (225 aa).

The RNase III domain maps to 7–129 (IPRLCRTLGY…IIGAIYLDSD (123 aa)). Glutamate 42 contributes to the Mg(2+) binding site. Residue aspartate 46 is part of the active site. Residues aspartate 115 and glutamate 118 each contribute to the Mg(2+) site. Glutamate 118 is an active-site residue. The DRBM domain occupies 155–225 (DPKTLLQEYL…AAQVLELIKK (71 aa)).

This sequence belongs to the ribonuclease III family. As to quaternary structure, homodimer. The cofactor is Mg(2+).

The protein resides in the cytoplasm. It carries out the reaction Endonucleolytic cleavage to 5'-phosphomonoester.. Its function is as follows. Digests double-stranded RNA. Involved in the processing of primary rRNA transcript to yield the immediate precursors to the large and small rRNAs (23S and 16S). Processes some mRNAs, and tRNAs when they are encoded in the rRNA operon. Processes pre-crRNA and tracrRNA of type II CRISPR loci if present in the organism. The protein is Ribonuclease 3 of Shewanella pealeana (strain ATCC 700345 / ANG-SQ1).